A 131-amino-acid polypeptide reads, in one-letter code: Glycine cleavage system H protein (131 aa).

In terms of domain architecture, Lipoyl-binding spans 24–106 (RAIVGVSDHA…YGEGWIMVIE (83 aa)). At lysine 65 the chain carries N6-lipoyllysine.

The protein belongs to the GcvH family. As to quaternary structure, the glycine cleavage system is composed of four proteins: P, T, L and H. The cofactor is (R)-lipoate.

The glycine cleavage system catalyzes the degradation of glycine. The H protein shuttles the methylamine group of glycine from the P protein to the T protein. This chain is Glycine cleavage system H protein, found in Xylella fastidiosa (strain Temecula1 / ATCC 700964).